We begin with the raw amino-acid sequence, 221 residues long: uncharacterized protein (221 aa).

The N-terminal stretch at 1 to 23 (MNKLIQLALFFTLMLTGCSNSST) is a signal peptide. The tract at residues 67–221 (ELGKRKAKEE…QGYIDPEDAP (155 aa)) is disordered. The segment covering 68–150 (LGKRKAKEEA…EQKANAEKKR (83 aa)) has biased composition (basic and acidic residues). A coiled-coil region spans residues 70-161 (KRKAKEEAEK…SQAQRQQTEA (92 aa)). Polar residues predominate over residues 152–161 (SQAQRQQTEA). The span at 162-174 (PSSNSQDPPSSSS) shows a compositional bias: low complexity. A compositionally biased stretch (polar residues) spans 175 to 184 (QTDKTIQQPA). Residues 195–205 (YEERKKWHDDQ) are compositionally biased toward basic and acidic residues.

This is an uncharacterized protein from Bacillus subtilis (strain 168).